A 225-amino-acid polypeptide reads, in one-letter code: Thymidylate kinase (225 aa).

An ATP-binding site is contributed by 12 to 19 (GGEGAGKS).

Belongs to the thymidylate kinase family.

The catalysed reaction is dTMP + ATP = dTDP + ADP. Phosphorylation of dTMP to form dTDP in both de novo and salvage pathways of dTTP synthesis. This Chelativorans sp. (strain BNC1) protein is Thymidylate kinase.